Here is a 271-residue protein sequence, read N- to C-terminus: Phosphatidylinositol transfer protein beta isoform (271 aa).

Lys-215 carries the N6-acetyllysine modification. Ser-262 bears the Phosphoserine mark.

It belongs to the PtdIns transfer protein family. PI transfer class I subfamily. In terms of processing, constitutive phosphorylation of Ser-262 has no effect on phospholipid transfer activity but is required for Golgi targeting. Expressed abundantly in brain, kidney, liver, and lung, but in a lesser amount in testis.

Its subcellular location is the golgi apparatus. It is found in the golgi apparatus membrane. The protein resides in the endoplasmic reticulum membrane. It catalyses the reaction a 1,2-diacyl-sn-glycero-3-phosphocholine(in) = a 1,2-diacyl-sn-glycero-3-phosphocholine(out). The enzyme catalyses a 1,2-diacyl-sn-glycero-3-phospho-(1D-myo-inositol)(in) = a 1,2-diacyl-sn-glycero-3-phospho-(1D-myo-inositol)(out). The catalysed reaction is an N-(acyl)-sphingosylphosphocholine(in) = an N-(acyl)-sphingosylphosphocholine(out). Its activity is regulated as follows. Phosphatidylinositol transfer activity is inhibited by N-ethylmaleimide. Functionally, catalyzes the transfer of phosphatidylinositol between membranes. Also catalyzes the transfer of phosphatidylcholine and sphingomyelin between membranes. Required for COPI-mediated retrograde transport from the Golgi to the endoplasmic reticulum; phosphatidylinositol and phosphatidylcholine transfer activity is essential for this function. The chain is Phosphatidylinositol transfer protein beta isoform (Pitpnb) from Rattus norvegicus (Rat).